An 855-amino-acid polypeptide reads, in one-letter code: DNA mismatch repair protein MutS (855 aa).

616 to 623 serves as a coordination point for ATP; sequence GPNMGGKS.

The protein belongs to the DNA mismatch repair MutS family.

Functionally, this protein is involved in the repair of mismatches in DNA. It is possible that it carries out the mismatch recognition step. This protein has a weak ATPase activity. The sequence is that of DNA mismatch repair protein MutS from Salmonella newport (strain SL254).